The chain runs to 263 residues: Ribosomal RNA small subunit methyltransferase J (263 aa).

Residues 115-116 (RD), 131-132 (ER), and aspartate 181 each bind S-adenosyl-L-methionine.

Belongs to the methyltransferase superfamily. RsmJ family.

Its subcellular location is the cytoplasm. It carries out the reaction guanosine(1516) in 16S rRNA + S-adenosyl-L-methionine = N(2)-methylguanosine(1516) in 16S rRNA + S-adenosyl-L-homocysteine + H(+). Functionally, specifically methylates the guanosine in position 1516 of 16S rRNA. The sequence is that of Ribosomal RNA small subunit methyltransferase J from Hahella chejuensis (strain KCTC 2396).